Reading from the N-terminus, the 78-residue chain is MGRSIRLFATFFLIAMLFLSTEMGPMTSAEARTCESQSHRFHGTCVRESNCASVCQTEGFIGGNCRAFRRRCFCTRNC.

Positions 1–31 (MGRSIRLFATFFLIAMLFLSTEMGPMTSAEA) are cleaved as a signal peptide. 4 cysteine pairs are disulfide-bonded: Cys34-Cys78, Cys45-Cys65, Cys51-Cys72, and Cys55-Cys74.

The protein belongs to the DEFL family. As to expression, predominantly expressed in the pistil during all stages of flower development.

It is found in the secreted. Functionally, may be involved in the defense of the pistil against pathogen infection. The protein is Defensin-like protein of Petunia integrifolia (Violet-flowered petunia).